The sequence spans 630 residues: Polygalacturonase-1 non-catalytic subunit beta (630 aa).

Residues 1 to 27 (MHTKIHLPPCILLLLLFSLPSFNVVVG) form the signal peptide. A propeptide spanning residues 28–108 (GDGESGNPFT…MCAPDLSPSL (81 aa)) is cleaved from the precursor. N-linked (GlcNAc...) asparagine glycosylation is found at Asn-124, Asn-142, Asn-256, Asn-334, Asn-369, and Asn-387. The propeptide occupies 398–630 (EVNGGKKVNN…ENDMTWAIAD (233 aa)). The 215-residue stretch at 415-629 (FFREKMLKSG…FENDMTWAIA (215 aa)) folds into the BURP domain.

Interacts with polygalacturonase-2 (isoenzymes PG2A and PG2B) to form heterodimers called polygalacturonase-1 (PG1). In terms of tissue distribution, mostly expressed in fruit pericarp. Also detected at low levels in cell wall of roots, leaves and flowers (at protein level).

It localises to the secreted. The protein localises to the extracellular space. It is found in the apoplast. Its subcellular location is the cell wall. Functionally, non-catalytic subunit of the polygalacturonase isozyme 1 (PG1). Necessary and sufficient to convert the polygalacturonase from its monomeric form PG2 to its heterodimeric form PG1. Seems to limit the depolymerization and solubilization of cell wall polyuronides mediated by PG2 during ripening, probably by recruiting PG2 to form PG1. In Solanum lycopersicum (Tomato), this protein is Polygalacturonase-1 non-catalytic subunit beta (GP1).